The chain runs to 207 residues: TM2 domain-containing protein 1 (207 aa).

The signal sequence occupies residues 1–37 (MAAAWPSGPSAPEAVTARLVGVLWFVSVTTGPWGAVA). Topologically, residues 40–128 (AGGEESLKCE…YSYKVAVALS (89 aa)) are extracellular. Asparagine 72, asparagine 75, asparagine 87, and asparagine 96 each carry an N-linked (GlcNAc...) asparagine glycan. A TM2 domain is found at 118–166 (GYSYKVAVALSLFLGWLGADRFYLGYPALGLLKFCTVGFCGIGSLIDFI). Residues 129–149 (LFLGWLGADRFYLGYPALGLL) traverse the membrane as a helical segment. The Cytoplasmic segment spans residues 150–153 (KFCT). Residues 154–174 (VGFCGIGSLIDFILISMQIVG) form a helical membrane-spanning segment. The Extracellular portion of the chain corresponds to 175–207 (PSDGSSYIIDYYGTRLTRLSITNETFRKTQLYP). Asparagine 197 carries N-linked (GlcNAc...) asparagine glycosylation.

It belongs to the TM2 family. In terms of assembly, interacts with APP beta-APP42 (amyloid-beta protein 42). Post-translationally, N-glycosylated. In terms of tissue distribution, widely expressed.

It localises to the membrane. In terms of biological role, may participate in amyloid-beta-induced apoptosis via its interaction with beta-APP42. In Homo sapiens (Human), this protein is TM2 domain-containing protein 1 (TM2D1).